The sequence spans 163 residues: Cyclic pyranopterin monophosphate synthase (163 aa).

Residues 75–77 (LCH) and 115–116 (ME) each bind substrate. Residue aspartate 130 is part of the active site.

This sequence belongs to the MoaC family. Homohexamer; trimer of dimers.

The enzyme catalyses (8S)-3',8-cyclo-7,8-dihydroguanosine 5'-triphosphate = cyclic pyranopterin phosphate + diphosphate. It participates in cofactor biosynthesis; molybdopterin biosynthesis. Its function is as follows. Catalyzes the conversion of (8S)-3',8-cyclo-7,8-dihydroguanosine 5'-triphosphate to cyclic pyranopterin monophosphate (cPMP). In Variovorax paradoxus (strain S110), this protein is Cyclic pyranopterin monophosphate synthase.